The chain runs to 732 residues: Elongation factor 2 (732 aa).

The 242-residue stretch at 19–260 folds into the tr-type G domain; that stretch reads ERIRNIDIAA…MVIKNLPNPR (242 aa). GTP contacts are provided by residues 28-35, 94-98, and 148-151; these read AHIDHGKT, DTPGH, and NKVD. H598 is modified (diphthamide).

It belongs to the TRAFAC class translation factor GTPase superfamily. Classic translation factor GTPase family. EF-G/EF-2 subfamily.

It localises to the cytoplasm. In terms of biological role, catalyzes the GTP-dependent ribosomal translocation step during translation elongation. During this step, the ribosome changes from the pre-translocational (PRE) to the post-translocational (POST) state as the newly formed A-site-bound peptidyl-tRNA and P-site-bound deacylated tRNA move to the P and E sites, respectively. Catalyzes the coordinated movement of the two tRNA molecules, the mRNA and conformational changes in the ribosome. This chain is Elongation factor 2, found in Picrophilus torridus (strain ATCC 700027 / DSM 9790 / JCM 10055 / NBRC 100828 / KAW 2/3).